We begin with the raw amino-acid sequence, 546 residues long: MTPGEVRRLYFIIRTFLSYGLDELIPKMRITLPLRLWRYSLFWMPNRHKDKLLGERLRLALQELGPVWIKFGQMLSTRRDLFPPHIADQLALLQDKVAPFDGKLAKQQIEAAMGGLPVEAWFDDFEIKPLASASIAQVHTARLKSNGKEVVIKVIRPDILPVIKADLKLIYRLARWVPRLLPDGRRLRPTEVVREYEKTLIDELNLLRESANAIQLRRNFEDSPMLYIPEVYPDYCSEGMMVMERIYGIPVSDVAALEKNGTNMKLLAERGVQVFFTQVFRDSFFHADMHPGNIFVSYEHPENPKYIGIDCGIVGSLNKEDKRYLAENFIAFFNRDYRKVAELHVDSGWVPPDTNVEEFEFAIRTVCEPIFEKPLAEISFGHVLLNLFNTARRFNMEVQPQLVLLQKTLLYVEGVGRQLYPQLDLWKTAKPFLESWIKDQVGIPALVRAFKEKAPFWVEKMPELPELVYDSLRQGKYLQHSVDKIARELQSNHVRQGQSRYFLGIGATLVLSGTFLLVSRPEWGLMPGWLMAGGLIAWFVGWRKTR.

The region spanning 124–502 (DFEIKPLASA…HVRQGQSRYF (379 aa)) is the Protein kinase domain. ATP contacts are provided by residues 130-138 (LASASIAQV) and lysine 153. The Proton acceptor role is filled by aspartate 288. Helical transmembrane passes span 501-521 (YFLG…VSRP) and 522-542 (EWGL…FVGW).

It belongs to the ABC1 family. UbiB subfamily.

It localises to the cell inner membrane. Its pathway is cofactor biosynthesis; ubiquinone biosynthesis [regulation]. Its function is as follows. Is probably a protein kinase regulator of UbiI activity which is involved in aerobic coenzyme Q (ubiquinone) biosynthesis. The chain is Probable protein kinase UbiB from Shigella boydii serotype 18 (strain CDC 3083-94 / BS512).